A 442-amino-acid polypeptide reads, in one-letter code: tRNA-2-methylthio-N(6)-dimethylallyladenosine synthase (442 aa).

The 116-residue stretch at 2–117 (QGLYIKSYGC…LPELIIKARR (116 aa)) folds into the MTTase N-terminal domain. [4Fe-4S] cluster-binding residues include C11, C47, C80, C157, C161, and C164. One can recognise a Radical SAM core domain in the interval 143–374 (KNQEVSAFIS…QELLREQQLA (232 aa)). Residues 377-442 (RNMIGQTCSV…QNSVTGIVVN (66 aa)) enclose the TRAM domain.

The protein belongs to the methylthiotransferase family. MiaB subfamily. As to quaternary structure, monomer. Requires [4Fe-4S] cluster as cofactor.

It localises to the cytoplasm. It catalyses the reaction N(6)-dimethylallyladenosine(37) in tRNA + (sulfur carrier)-SH + AH2 + 2 S-adenosyl-L-methionine = 2-methylsulfanyl-N(6)-dimethylallyladenosine(37) in tRNA + (sulfur carrier)-H + 5'-deoxyadenosine + L-methionine + A + S-adenosyl-L-homocysteine + 2 H(+). Catalyzes the methylthiolation of N6-(dimethylallyl)adenosine (i(6)A), leading to the formation of 2-methylthio-N6-(dimethylallyl)adenosine (ms(2)i(6)A) at position 37 in tRNAs that read codons beginning with uridine. The protein is tRNA-2-methylthio-N(6)-dimethylallyladenosine synthase of Ehrlichia chaffeensis (strain ATCC CRL-10679 / Arkansas).